A 912-amino-acid chain; its full sequence is Ubiquitin carboxyl-terminal hydrolase 3 (912 aa).

Over residues 1–11 (MNMQDANKEES) the composition is skewed to basic and acidic residues. Disordered stretches follow at residues 1–30 (MNMQ…TNMQ), 68–176 (IYHQ…SYSS), 241–384 (NSSV…TTAG), and 396–417 (GKSS…YVPP). Composition is skewed to low complexity over residues 82–95 (NNIN…NNNI), 102–140 (SNGI…SNNH), and 159–176 (TNSS…SYSS). Over residues 249–259 (AHHHTKSHSIP) the composition is skewed to basic residues. Positions 260–310 (KHNEEVKTETHGEEEDAHDKKPHASKDAHELKKKTEVKKEDAKQDRNEKVI) are enriched in basic and acidic residues. Over residues 335–355 (SKTSSPSPSPPAAKSWSAIAS) the composition is skewed to low complexity. Polar residues-rich tracts occupy residues 361 to 384 (RQAS…TTAG) and 396 to 406 (GKSSSPLLSKQ). The 452-residue stretch at 460–911 (RGIINRANIC…TAYILMYQKR (452 aa)) folds into the USP domain. C469 (nucleophile) is an active-site residue. The active-site Proton acceptor is H861.

Belongs to the peptidase C19 family. Heterotetramer with BRE5; contains two molecules of BRE5 and two molecules of UBP3. Forms a complex composed of CDC48, DOA1, deubiquitinase UBP3 and probably BRE5. Within the complex interacts directly with DOA1 and CDC48 in a BRE5-independent manner.

The enzyme catalyses Thiol-dependent hydrolysis of ester, thioester, amide, peptide and isopeptide bonds formed by the C-terminal Gly of ubiquitin (a 76-residue protein attached to proteins as an intracellular targeting signal).. In terms of biological role, has an ATP-independent isopeptidase activity, cleaving at the C-terminus of the ubiquitin moiety in natural or engineered linear fusion proteins, irrespective of their size or the presence of an N-terminal extension to ubiquitin. Plays a role in regulation of silencing by interacting with SIR4. Also, in conjunction with BRE5, cleaves ubiquitin, leading to the subsequent mono-ubiquitination of SEC23. Required for ribophagy, a process which relocalizes ribosomal particles into the vacuole for degradation in response to starvation. This Saccharomyces cerevisiae (strain ATCC 204508 / S288c) (Baker's yeast) protein is Ubiquitin carboxyl-terminal hydrolase 3 (UBP3).